Here is a 326-residue protein sequence, read N- to C-terminus: D-amino-acid oxidase (326 aa).

Gly-18, Val-19, Thr-46, Thr-47, Ser-48, Ala-52, Ala-53, Val-162, and Ser-179 together coordinate FAD. The D-proline site is built by Tyr-222 and Arg-277. D-serine-binding residues include Tyr-222 and Arg-277. FAD is bound by residues Arg-277, Gly-303, Gly-304, Gly-306, and Thr-308. Position 304 (Gly-304) interacts with D-proline. A D-serine-binding site is contributed by Gly-304.

This sequence belongs to the DAMOX/DASOX family. Monomer. The cofactor is FAD.

It localises to the cytoplasm. Its subcellular location is the secreted. The protein resides in the cell wall. It carries out the reaction a D-alpha-amino acid + O2 + H2O = a 2-oxocarboxylate + H2O2 + NH4(+). The enzyme catalyses D-valine + O2 + H2O = 3-methyl-2-oxobutanoate + H2O2 + NH4(+). It catalyses the reaction D-leucine + O2 + H2O = 4-methyl-2-oxopentanoate + H2O2 + NH4(+). The catalysed reaction is D-isoleucine + O2 + H2O = (R)-3-methyl-2-oxopentanoate + H2O2 + NH4(+). It carries out the reaction D-tyrosine + O2 + H2O = 3-(4-hydroxyphenyl)pyruvate + H2O2 + NH4(+). The enzyme catalyses D-threonine + O2 + H2O = (S)-3-hydroxy-2-oxobutanoate + H2O2 + NH4(+). With respect to regulation, inhibited by benzoate and phenylmethylsulfonyl fluoride (PMSF). Weakly inhibited by anthranilate, crotonate, and the amino acid-modifying agents dithionitrobenzoic acid and diethyl pyrocarbonate. Not inhibited by malonate, meso-tartrate, D-malate, or the amino acid-modifying agents iodoacetic acid or butane-2,3-dione. Its function is as follows. Catalyzes the oxidative deamination of D-amino acids with broad substrate specificity. This Rubrobacter xylanophilus (strain DSM 9941 / JCM 11954 / NBRC 16129 / PRD-1) protein is D-amino-acid oxidase.